The following is a 415-amino-acid chain: uncharacterized protein (415 aa).

Zn(2+) is bound at residue His-88. Residue Asp-90 is part of the active site. A Zn(2+)-binding site is contributed by Asp-121. The Proton acceptor role is filled by Glu-155. Zn(2+) contacts are provided by Glu-156, Asp-185, and His-392.

Belongs to the peptidase M20A family. Requires Zn(2+) as cofactor. The cofactor is Co(2+).

This is an uncharacterized protein from Methanococcus maripaludis (strain DSM 14266 / JCM 13030 / NBRC 101832 / S2 / LL).